Here is a 131-residue protein sequence, read N- to C-terminus: Insertion element IS1 protein InsB (131 aa).

This sequence belongs to the transposase 27 family.

Functionally, absolutely required for transposition of IS1. This chain is Insertion element IS1 protein InsB (insB1), found in Shigella flexneri.